Consider the following 397-residue polypeptide: Elongation factor Tu (397 aa).

Positions 10-207 (KPHVNIGTIG…AVDESIPEPV (198 aa)) constitute a tr-type G domain. Residues 19-26 (GHVDHGKT) form a G1 region. 19–26 (GHVDHGKT) is a GTP binding site. Thr26 lines the Mg(2+) pocket. The interval 63-67 (GITIN) is G2. The interval 84 to 87 (DAPG) is G3. Residues 84–88 (DAPGH) and 139–142 (NKSD) each bind GTP. The tract at residues 139–142 (NKSD) is G4. Residues 177–179 (SGL) form a G5 region.

Belongs to the TRAFAC class translation factor GTPase superfamily. Classic translation factor GTPase family. EF-Tu/EF-1A subfamily. In terms of assembly, monomer.

The protein resides in the cytoplasm. It catalyses the reaction GTP + H2O = GDP + phosphate + H(+). GTP hydrolase that promotes the GTP-dependent binding of aminoacyl-tRNA to the A-site of ribosomes during protein biosynthesis. This Clavibacter sepedonicus (Clavibacter michiganensis subsp. sepedonicus) protein is Elongation factor Tu.